A 271-amino-acid polypeptide reads, in one-letter code: Putative phosphoenolpyruvate synthase regulatory protein (271 aa).

151–158 (GVSRSGKT) provides a ligand contact to ADP.

Belongs to the pyruvate, phosphate/water dikinase regulatory protein family. PSRP subfamily.

The catalysed reaction is [pyruvate, water dikinase] + ADP = [pyruvate, water dikinase]-phosphate + AMP + H(+). The enzyme catalyses [pyruvate, water dikinase]-phosphate + phosphate + H(+) = [pyruvate, water dikinase] + diphosphate. Its function is as follows. Bifunctional serine/threonine kinase and phosphorylase involved in the regulation of the phosphoenolpyruvate synthase (PEPS) by catalyzing its phosphorylation/dephosphorylation. The protein is Putative phosphoenolpyruvate synthase regulatory protein of Paraburkholderia xenovorans (strain LB400).